Consider the following 61-residue polypeptide: Small ribosomal subunit protein uS14 (61 aa).

The Zn(2+) site is built by cysteine 24, cysteine 27, cysteine 40, and cysteine 43.

Belongs to the universal ribosomal protein uS14 family. Zinc-binding uS14 subfamily. In terms of assembly, part of the 30S ribosomal subunit. Contacts proteins S3 and S10. Requires Zn(2+) as cofactor.

In terms of biological role, binds 16S rRNA, required for the assembly of 30S particles and may also be responsible for determining the conformation of the 16S rRNA at the A site. This chain is Small ribosomal subunit protein uS14, found in Mycobacterium avium (strain 104).